A 59-amino-acid chain; its full sequence is uncharacterized protein (59 aa).

Basic and acidic residues-rich tracts occupy residues 1-23 and 36-45; these read MAEHRGGSGNFAEDREKASDAGR and DPQRASEAGK. Residues 1–59 form a disordered region; that stretch reads MAEHRGGSGNFAEDREKASDAGRKGGQHSGGNFKNDPQRASEAGKKGGQQSGGNKSGKS. Positions 46-59 are enriched in gly residues; that stretch reads KGGQQSGGNKSGKS.

Belongs to the con-10 family.

This is an uncharacterized protein from Escherichia coli (strain K12).